Here is a 437-residue protein sequence, read N- to C-terminus: 3-ketoacyl-CoA thiolase (437 aa).

Catalysis depends on C99, which acts as the Acyl-thioester intermediate. Catalysis depends on proton acceptor residues H392 and C422.

Belongs to the thiolase-like superfamily. Thiolase family. In terms of assembly, heterotetramer of two alpha chains (FadJ) and two beta chains (FadI).

It is found in the cytoplasm. The catalysed reaction is an acyl-CoA + acetyl-CoA = a 3-oxoacyl-CoA + CoA. It functions in the pathway lipid metabolism; fatty acid beta-oxidation. Its function is as follows. Catalyzes the final step of fatty acid oxidation in which acetyl-CoA is released and the CoA ester of a fatty acid two carbons shorter is formed. The sequence is that of 3-ketoacyl-CoA thiolase from Pectobacterium carotovorum subsp. carotovorum (strain PC1).